Reading from the N-terminus, the 385-residue chain is tRNA-specific 2-thiouridylase MnmA (385 aa).

Residues 29 to 36 (GLSGGVDS) and Leu-55 each bind ATP. The active-site Nucleophile is Cys-116. A disulfide bond links Cys-116 and Cys-225. Gly-141 provides a ligand contact to ATP. Residues 175–177 (KDQ) form an interaction with tRNA region. The Cysteine persulfide intermediate role is filled by Cys-225. The tract at residues 330 to 331 (RY) is interaction with tRNA.

Belongs to the MnmA/TRMU family.

It localises to the cytoplasm. The enzyme catalyses S-sulfanyl-L-cysteinyl-[protein] + uridine(34) in tRNA + AH2 + ATP = 2-thiouridine(34) in tRNA + L-cysteinyl-[protein] + A + AMP + diphosphate + H(+). Functionally, catalyzes the 2-thiolation of uridine at the wobble position (U34) of tRNA, leading to the formation of s(2)U34. This chain is tRNA-specific 2-thiouridylase MnmA, found in Prochlorococcus marinus (strain AS9601).